Here is a 502-residue protein sequence, read N- to C-terminus: Probable glycine dehydrogenase (decarboxylating) subunit 2 (502 aa).

K273 carries the N6-(pyridoxal phosphate)lysine modification.

It belongs to the GcvP family. C-terminal subunit subfamily. The glycine cleavage system is composed of four proteins: P, T, L and H. In this organism, the P 'protein' is a heterodimer of two subunits. Pyridoxal 5'-phosphate is required as a cofactor.

It carries out the reaction N(6)-[(R)-lipoyl]-L-lysyl-[glycine-cleavage complex H protein] + glycine + H(+) = N(6)-[(R)-S(8)-aminomethyldihydrolipoyl]-L-lysyl-[glycine-cleavage complex H protein] + CO2. Functionally, the glycine cleavage system catalyzes the degradation of glycine. The P protein binds the alpha-amino group of glycine through its pyridoxal phosphate cofactor; CO(2) is released and the remaining methylamine moiety is then transferred to the lipoamide cofactor of the H protein. The protein is Probable glycine dehydrogenase (decarboxylating) subunit 2 of Staphylococcus epidermidis (strain ATCC 35984 / DSM 28319 / BCRC 17069 / CCUG 31568 / BM 3577 / RP62A).